Here is a 670-residue protein sequence, read N- to C-terminus: MLFNEHQKKAISYISGPCLILAGAGSGKTRVIINKIVHLIKICHFDPKCITAITFTNKAACEMKSRILNVLSVNVSNLVKISTFHALGLEIIKSEIELLNIKSNFTIFDEQDQISILQEIVSKEDRSFVRQIRQSISNWKNKLLCPNQVNKISNSSIEFKFFRYYELYNAYLKSSNILDFDDLIFLPTILLRDNKLSRERWNDKIKYLLVDEYQDTNFIQYKLIKLLSSKRSNFTLVGDDDQSIYSWRGANIHNFESLKHDYPNLRTIIMQHNYRSSGRILKVANALISNNLHFFNKKLFSNLDYGSIVEIISAKNEEDEARVILQTLMLHKSNYNAQYKDYAILYRSNYQVKIFEKFLIKFKIPYKILANISFFSRPEIKDLIAYLRLIINPDDNAAFLRVVNRPLRGIGAVTLQKLKEWSKKRNQSFFMASLDIGLESILPVHNLKSLQEFVYLIQTISYQIQLNPIEVLEKLVATIKYEKWLMRSLKFSKLYVASIKNISIVLNWIINELKYKIMNSKKFVMKYLIDIISEFILQNSLNEDIVINNDYVQLMTLHASKGLEFLYVFIVGVEEGVLPYYRNTTMENNIDEERRLAYVGITRAQKKLFLSYAIQRCQYGVVINTKPSRFLRELPQSDILWQKSKILNLNEKNNFLFKAYKKSLKKKLLR.

Residues 1-277 (MLFNEHQKKA…IIMQHNYRSS (277 aa)) enclose the UvrD-like helicase ATP-binding domain. Residues 22 to 29 (AGAGSGKT) and Arg275 contribute to the ATP site. The region spanning 278–562 (GRILKVANAL…QLMTLHASKG (285 aa)) is the UvrD-like helicase C-terminal domain.

Belongs to the helicase family. UvrD subfamily. In terms of assembly, homodimer.

The catalysed reaction is Couples ATP hydrolysis with the unwinding of duplex DNA by translocating in the 3'-5' direction.. It catalyses the reaction ATP + H2O = ADP + phosphate + H(+). In terms of biological role, rep helicase is a single-stranded DNA-dependent ATPase involved in DNA replication; it can initiate unwinding at a nick in the DNA. It binds to the single-stranded DNA and acts in a progressive fashion along the DNA in the 3' to 5' direction. The polypeptide is ATP-dependent DNA helicase Rep (Buchnera aphidicola subsp. Baizongia pistaciae (strain Bp)).